Consider the following 212-residue polypeptide: Probable nicotinate-nucleotide adenylyltransferase (212 aa).

This sequence belongs to the NadD family.

It carries out the reaction nicotinate beta-D-ribonucleotide + ATP + H(+) = deamido-NAD(+) + diphosphate. Its pathway is cofactor biosynthesis; NAD(+) biosynthesis; deamido-NAD(+) from nicotinate D-ribonucleotide: step 1/1. Catalyzes the reversible adenylation of nicotinate mononucleotide (NaMN) to nicotinic acid adenine dinucleotide (NaAD). The sequence is that of Probable nicotinate-nucleotide adenylyltransferase from Shewanella sp. (strain ANA-3).